We begin with the raw amino-acid sequence, 143 residues long: Large ribosomal subunit protein uL13 (143 aa).

The protein belongs to the universal ribosomal protein uL13 family. As to quaternary structure, part of the 50S ribosomal subunit.

In terms of biological role, this protein is one of the early assembly proteins of the 50S ribosomal subunit, although it is not seen to bind rRNA by itself. It is important during the early stages of 50S assembly. The chain is Large ribosomal subunit protein uL13 from Chloroflexus aggregans (strain MD-66 / DSM 9485).